The primary structure comprises 114 residues: Gas vesicle protein J1 (114 aa).

The alpha helix 1 stretch occupies residues 13 to 22; sequence LAEMLEMLLD. 2 beta-strand regions span residues 25 to 35 and 40 to 50; these read VVVNADIAVSV and LLGIELRAAIA. The short motif at 46-50 is the Conserved in GvpM1/2 but not GvpA element; it reads RAAIA. 3 alpha helix regions span residues 52 to 72, 78 to 87, and 95 to 105; these read FETA…ERVE, SPDQSDPASE, and TNPLSDDSTPT. Residues 63–114 are disordered; that stretch reads PTGTDMERVESAANISPDQSDPASETQSETESTNPLSDDSTPTASTSAEETK. Positions 75 to 98 are enriched in polar residues; that stretch reads ANISPDQSDPASETQSETESTNPL. A compositionally biased stretch (low complexity) spans 99–114; sequence SDDSTPTASTSAEETK.

Belongs to the gas vesicle GvpA family. As to quaternary structure, gvpF to GvpM interact with each other in vitro, and may form multi-subunit complex(es). Interacts with GvpA1.

It localises to the gas vesicle. Proteins GvpF to GvpM might be involved in nucleating gas vesicle formation. Mutagenesis of residues 13-61 shows that almost none of them can be substituted and still make gas vesicles. A minor component of the gas vesicle. Gas vesicles are hollow, gas filled proteinaceous nanostructures found in several microbial planktonic microorganisms. They allow positioning of halobacteria at the optimal depth for growth in the poorly aerated, shallow brine pools of their habitat. In terms of biological role, expression of a 9.5 kb p-vac DNA fragment containing 2 divergently transcribed regions (gvpD-gvpE-gvpF-gvpG-gvpH-gvpI-gvpJ-gvpK-gvpL-gvpM and gvpA-gvpC-gvpN-gvpO) allows H.volcanii to produce gas vesicles. All site-directed mutagenesis is tested in H.volcanii. A minimal gas vesicle can be made in H.volcanii by gvpA1-gvpO1 plus gvpF1-gvpG1-gvpJ1-gvpK1-gvpL1-gvpM1; lack of enough GvpJ1 prevents formation. A similar region restores gas vesicle production in H.halobium without the p-vac locus, but it still has the c-vac locus. This chain is Gas vesicle protein J1 (gvpJ11), found in Halobacterium salinarum (strain ATCC 700922 / JCM 11081 / NRC-1) (Halobacterium halobium).